Here is a 376-residue protein sequence, read N- to C-terminus: Erythronate-4-phosphate dehydrogenase (376 aa).

Residues S45 and T67 each contribute to the substrate site. D147 lines the NAD(+) pocket. Residue R209 is part of the active site. NAD(+) is bound at residue D233. Residue E238 is part of the active site. H255 serves as the catalytic Proton donor. G258 serves as a coordination point for NAD(+). Substrate is bound at residue Y259.

Belongs to the D-isomer specific 2-hydroxyacid dehydrogenase family. PdxB subfamily. In terms of assembly, homodimer.

It is found in the cytoplasm. It catalyses the reaction 4-phospho-D-erythronate + NAD(+) = (R)-3-hydroxy-2-oxo-4-phosphooxybutanoate + NADH + H(+). It participates in cofactor biosynthesis; pyridoxine 5'-phosphate biosynthesis; pyridoxine 5'-phosphate from D-erythrose 4-phosphate: step 2/5. In terms of biological role, catalyzes the oxidation of erythronate-4-phosphate to 3-hydroxy-2-oxo-4-phosphonooxybutanoate. The polypeptide is Erythronate-4-phosphate dehydrogenase (Shewanella baltica (strain OS195)).